The following is a 397-amino-acid chain: uncharacterized protein (397 aa).

4 consecutive transmembrane segments (helical) span residues 255-275 (LLTY…ICYA), 284-304 (MITF…VLLA), 308-328 (LITA…PLPL), and 370-390 (VLLV…YCLG).

It localises to the cell membrane. This is an uncharacterized protein from Methanocaldococcus jannaschii (strain ATCC 43067 / DSM 2661 / JAL-1 / JCM 10045 / NBRC 100440) (Methanococcus jannaschii).